Here is a 335-residue protein sequence, read N- to C-terminus: Vitamin B12 import system permease protein BtuC (335 aa).

A run of 9 helical transmembrane segments spans residues 21 to 43 (FLAI…GENW), 63 to 82 (FPRV…AGAV), 95 to 114 (GLLG…VLMF), 119 to 141 (PFWL…LLTF), 153 to 175 (LLVG…YFST), 195 to 212 (WRHQ…IWLS), 244 to 266 (FAVG…IGLV), 281 to 303 (TLLP…LSRL), and 310 to 329 (VPIG…WLLL).

It belongs to the binding-protein-dependent transport system permease family. FecCD subfamily. The complex is composed of two ATP-binding proteins (BtuD), two transmembrane proteins (BtuC) and a solute-binding protein (BtuF).

It is found in the cell inner membrane. Functionally, part of the ABC transporter complex BtuCDF involved in vitamin B12 import. Involved in the translocation of the substrate across the membrane. This chain is Vitamin B12 import system permease protein BtuC, found in Photorhabdus laumondii subsp. laumondii (strain DSM 15139 / CIP 105565 / TT01) (Photorhabdus luminescens subsp. laumondii).